A 411-amino-acid chain; its full sequence is Carbohydrate sulfotransferase 5 (411 aa).

Topologically, residues 1 to 30 (MGMRARVPKVAHSTRRPPAARMWLPRFSSK) are cytoplasmic. Residues 31-48 (TVTVLLLAQTTCLLLFII) traverse the membrane as a helical; Signal-anchor for type II membrane protein segment. At 49–411 (SRPGPSSPAG…PDHFSWASPD (363 aa)) the chain is on the lumenal side. Residue 71–77 (WRSGSSF) participates in 3'-phosphoadenylyl sulfate binding. The N-linked (GlcNAc...) asparagine glycan is linked to asparagine 138. A 3'-phosphoadenylyl sulfate-binding site is contributed by 224–232 (RDPRAVLRS). N-linked (GlcNAc...) asparagine glycosylation is found at asparagine 327 and asparagine 350.

It belongs to the sulfotransferase 1 family. Gal/GlcNAc/GalNAc subfamily. In terms of tissue distribution, predominantly expressed in small and large intestines and colon. Weakly expressed in lymphocytes. Not expressed in other tissues. Down-regulated in colonic adenocarcinomas.

The protein localises to the golgi apparatus membrane. Sulfotransferase that utilizes 3'-phospho-5'-adenylyl sulfate (PAPS) as sulfonate donor to catalyze the transfer of sulfate to position 6 of non-reducing N-acetylglucosamine (GlcNAc) residues and O-linked sugars of mucin-type acceptors. Acts on the non-reducing terminal GlcNAc of short carbohydrate substrates. However, it does not transfer sulfate to longer carbohydrate substrates that have poly-N-acetyllactosamine structures. Has no activity toward keratan. Not involved in generating HEV-expressed ligands for SELL. Its substrate specificity may be influenced by its subcellular location. This chain is Carbohydrate sulfotransferase 5 (CHST5), found in Homo sapiens (Human).